The chain runs to 532 residues: Collagen alpha-1(XXIII) chain (532 aa).

Residues 1-23 (MGAGERAAGGGGAQDPGAGCGSR) lie on the Cytoplasmic side of the membrane. Residues 24-45 (ALSALCLLLSVGSAAACLLLGA) traverse the membrane as a helical; Signal-anchor for type II membrane protein segment. Over 46 to 532 (QAAALHGRVA…GLPVPGCWHK (487 aa)) the chain is Extracellular. Disordered regions lie at residues 102-296 (PSEC…GEQG) and 308-532 (LDAL…CWHK). Collagen-like domains follow at residues 108–166 (PPGP…RGAQ), 173–232 (GPPG…PGKK), 240–298 (QPGL…QGDT), and 313–372 (GPPG…MGLS). The span at 129 to 145 (QSGRDGYPGPLGLDGKP) shows a compositional bias: low complexity. The segment covering 174 to 184 (PPGPPGPPGAR) has biased composition (pro residues). Positions 196 to 207 (RGAQGPAGPRGE) are enriched in low complexity. The segment covering 314-326 (PPGPQGAPGPPGI) has biased composition (pro residues). Basic and acidic residues-rich tracts occupy residues 342-354 (DGEKGPKGPKGDP) and 380-393 (PKGEKGESASDHLQ). The segment covering 403 to 414 (PGPPGPPGPPGP) has biased composition (pro residues). Collagen-like domains follow at residues 404-452 (GPPG…GPPG) and 455-514 (GLPG…PGLD). Basic and acidic residues-rich tracts occupy residues 427–441 (DGAKGEKGTSGERGP) and 478–495 (RGEKGDRSERGEKGERGV).

As to quaternary structure, homotrimer. Undergoes proteolytic cleavage by furin protease to yield a 60 kDa soluble form that forms a homotrimer and exhibits a low affinity interaction with heparin.

The protein localises to the cell membrane. This Mus musculus (Mouse) protein is Collagen alpha-1(XXIII) chain (Col23a1).